A 415-amino-acid polypeptide reads, in one-letter code: Ribulose bisphosphate carboxylase/oxygenase activase (415 aa).

37-44 (GRKGEGKT) serves as a coordination point for ATP.

Belongs to the RuBisCO activase family.

In terms of biological role, activation of RuBisCO (ribulose-1,5-bisohosphate carboxylase/oxygenase; EC 4.1.1.39) involves the ATP-dependent carboxylation of the epsilon-amino group of lysine leading to a carbamate structure. This Anabaena sp. (strain CA / ATCC 33047) protein is Ribulose bisphosphate carboxylase/oxygenase activase (rca).